The following is an 841-amino-acid chain: DNA ligase (841 aa).

NAD(+) is bound by residues 33 to 37 (DAQYD), 82 to 83 (SL), and E114. K116 (N6-AMP-lysine intermediate) is an active-site residue. The NAD(+) site is built by R137, E174, K300, and K324. Positions 418, 421, 436, and 442 each coordinate Zn(2+). A BRCT domain is found at 758 to 841 (EKTGPLDGQT…AFLGEHGQQR (84 aa)).

The protein belongs to the NAD-dependent DNA ligase family. LigA subfamily. The cofactor is Mg(2+). Mn(2+) serves as cofactor.

It carries out the reaction NAD(+) + (deoxyribonucleotide)n-3'-hydroxyl + 5'-phospho-(deoxyribonucleotide)m = (deoxyribonucleotide)n+m + AMP + beta-nicotinamide D-nucleotide.. DNA ligase that catalyzes the formation of phosphodiester linkages between 5'-phosphoryl and 3'-hydroxyl groups in double-stranded DNA using NAD as a coenzyme and as the energy source for the reaction. It is essential for DNA replication and repair of damaged DNA. The polypeptide is DNA ligase (Xanthomonas oryzae pv. oryzae (strain MAFF 311018)).